The following is a 213-amino-acid chain: Eukaryotic translation initiation factor isoform 4E (213 aa).

Positions 1–37 (MATEVAAAVPPPQLDAEENSGLEAAAAEAKIQPSSGP) are disordered. Residues 56–61 (QGAAWG), Lys-88, and 106–107 (WE) contribute to the mRNA site. An intrachain disulfide couples Cys-111 to Cys-150. MRNA contacts are provided by residues 157 to 162 (RQRQDK) and 202 to 205 (KRER).

The protein belongs to the eukaryotic initiation factor 4E family. EIF4F is a multi-subunit complex, the composition of which varies with external and internal environmental conditions. It is composed of at least EIF4A, EIF4E and EIF4G. EIF4E is also known to interact with other partners. In higher plants two isoforms of EIF4F have been identified, named isoform EIF4F and isoform EIF(iso)4F. Isoform EIF4F has subunits p220 and p26, whereas isoform EIF(iso)4F has subunits p82 and p28. In terms of assembly, (Microbial infection) Interacts with potyvirus viral genome-linked protein (VPg) of plum pox virus (PPV) strain D both in nucleus and cytoplasm; this interaction is possible in susceptible hosts but is impaired in resistant plants. Post-translationally, according to the redox status, the Cys-111-Cys-150 disulfide bridge may have a role in regulating protein function by affecting its ability to bind capped mRNA. As to expression, mostly expressed in leaves, flower buds, leaf buds and anthers, to a lower extent in roots, stems and green immature fruit, and, at low levels, in petals.

The protein localises to the cytoplasm. It is found in the nucleus. Its function is as follows. Component of the protein complex eIF4F, which is involved in the recognition of the mRNA cap, ATP-dependent unwinding of 5'-terminal secondary structure and recruitment of mRNA to the ribosome. Recognizes and binds the 7-methylguanosine-containing mRNA cap during an early step in the initiation of protein synthesis and facilitates ribosome binding by inducing the unwinding of the mRNAs secondary structures. Key component of recessive resistance to potyviruses such as the plum pox virus (PPV) strain D. (Microbial infection) Susceptibility host factor required for viral infection by recruiting viral RNAs to the host ribosomal complex via an interaction with viral genome-linked protein (VPg). The chain is Eukaryotic translation initiation factor isoform 4E from Prunus domestica (Garden plum).